The primary structure comprises 111 residues: Dynein light chain Tctex-type (111 aa).

It belongs to the dynein light chain Tctex-type family.

It localises to the cytoplasm. It is found in the cytoskeleton. In terms of biological role, acts as a non-catalytic accessory component of a dynein complex. This chain is Dynein light chain Tctex-type (dlc1), found in Schizosaccharomyces pombe (strain 972 / ATCC 24843) (Fission yeast).